Here is a 413-residue protein sequence, read N- to C-terminus: uncharacterized protein (413 aa).

Transmembrane regions (helical) follow at residues 10-32, 162-184, 189-211, 232-254, 259-276, 288-310, and 325-347; these read GLTI…GRLP, VFLH…LVFL, LLPR…AFLV, LSFR…LFFF, YSYS…ILLV, ALMV…SFVT, and FAYA…SLIL.

Its subcellular location is the cell membrane. This is an uncharacterized protein from Aquifex aeolicus (strain VF5).